Reading from the N-terminus, the 84-residue chain is Esculentin-1Vb (84 aa).

An N-terminal signal peptide occupies residues 1–22 (MFTLKKPLLLIVLLGIISLSLC). A propeptide spanning residues 23 to 36 (EQERNADEDEESET) is cleaved from the precursor. A disulfide bridge links Cys-78 with Cys-84.

In terms of tissue distribution, expressed by the skin glands.

Its subcellular location is the secreted. Its function is as follows. Antimicrobial peptide. This is Esculentin-1Vb from Odorrana versabilis (Chinese bamboo leaf odorous frog).